Consider the following 539-residue polypeptide: Glutamyl-tRNA(Gln) amidotransferase subunit A, mitochondrial (539 aa).

Residues K94 and S181 each act as charge relay system in the active site. The active-site Acyl-ester intermediate is S205.

Belongs to the amidase family. GatA subfamily. As to quaternary structure, subunit of the heterotrimeric GatCAB amidotransferase (AdT) complex, composed of A, B and C subunits.

The protein resides in the mitochondrion. The catalysed reaction is L-glutamyl-tRNA(Gln) + L-glutamine + ATP + H2O = L-glutaminyl-tRNA(Gln) + L-glutamate + ADP + phosphate + H(+). Its function is as follows. Allows the formation of correctly charged Gln-tRNA(Gln) through the transamidation of misacylated Glu-tRNA(Gln) in the mitochondria. The reaction takes place in the presence of glutamine and ATP through an activated gamma-phospho-Glu-tRNA(Gln). This is Glutamyl-tRNA(Gln) amidotransferase subunit A, mitochondrial from Mycosarcoma maydis (Corn smut fungus).